Reading from the N-terminus, the 1405-residue chain is MKDLLNLFNQQRQTLDFDAIKIALASPDLIRSWSYGEVKKPETINYRTFKPERDGLFCAAIFGPIKDYECLCGKYKRMKHRGVVCEKCGTEVTLAKVRRERMGHIDLASPVAHIWFLKSLPSRIGLMLDMTLRDIERVLYFEAYVVTEPGLTPLERRQLLTEEQYLTARQEYNDDFDAAMGAEAVYELLRTIDLQSEMTRLREEIASTGSETKLKRLTKRIKLIEAFLESGNRPEWMVMTVLPVLPPDLRPLVPLDGGRFATSDLNDLYRRVINRNNRLRRLLELNAPDIIVRNEKRMLQESVDALLDNGRRGRAITGTNKRPLKSLADMIKGKQGRFRQNLLGKRVDYSGRSVITVGPYLKLHQCGLPKKMALELFKPFVFAKLQRRGLATTIKAAKKLVEREEAEVWDILEEVIREHPVLLNRAPTLHRLGIQAFEPVLIEGKAIQLHPLVCTAFNADFDGDQMAVHVPLSLEAQLEARALMMSTNNILSPANGEPIIVPSQDVVLGLYYMSRALENKKGEGMVFANTSEVKRAYDNRVVELHAKVKVRITQVDVDTVDGKRTSGTSIVDTTVGRALLSEILPEGLPFQLANTEMTKKNISRLINSSYRLLGLKDTVVFADKLMYTGYAYATRAGVSIGIDDMLIPDEKKGILTEAEAEVLEIQEQYQSGLVTAGERYNKVVDIWSRTSGRIAKAMMDTIGTEKVENAKGETIDQKSMNSLYIMADSGARGSQAQIRQLAGMRGLMARPDGSIIETPIKANFREGLNVQEYFNSTHGARKGLADTALKTANSGYLTRRLVDVAQDVVITEVDCGTTEGLIMTPIVEGGDVVEPLKERVLGRVVAEDVYLPGNDEEPIVTRNTLLDEAWVAKLEDASVQSVKVRSTISCESSFGVCARCYGRDLARGHQVNIGEAVGVIAAQSIGEPGTQLTMRTFHIGGAASRAAAVDNITVKTTGSVKFNNLKSVAHASGALVAVSRSGELSVLDGHGRERERYKLPYGATITAKDGDAVKAGQAVANWDPHNHPIVSEVAGFIRFIDFVDGVTVIEKTDELTGLASREITDPKRRGAQAKELRPIVRIVDAKGNDLTIPNTDLPAQYLLPPRSIVNLQDGAAVGVGDVVAKIPQEASKTRDITGGLPRVADLFEARKPKDPAILAERSGIISFGKDTKGKQRLIIKDTDGSEHEELIPKYRQIIVFEGEHVTKGETVVDGEPSPQDILRLLGVEPLAAYLVKEIQDVYRLQGVKINDKHIEVITRQMLRKVEITDQGNSKFLNGEQVERQRVIEENARLVTRNELPAKYDPVLLGITKASLATESFISAASFQETTRVLTEAAVRGTRDNLRGLKENVIVGRLIPAGTGLAYHAGRRKASGLTDSEMETLSGKPAVAEPVATVADAGADEE.

Zn(2+) contacts are provided by cysteine 70, cysteine 72, cysteine 85, and cysteine 88. Mg(2+) contacts are provided by aspartate 460, aspartate 462, and aspartate 464. Residues cysteine 815, cysteine 890, cysteine 897, and cysteine 900 each coordinate Zn(2+).

The protein belongs to the RNA polymerase beta' chain family. In terms of assembly, the RNAP catalytic core consists of 2 alpha, 1 beta, 1 beta' and 1 omega subunit. When a sigma factor is associated with the core the holoenzyme is formed, which can initiate transcription. Mg(2+) is required as a cofactor. The cofactor is Zn(2+).

It carries out the reaction RNA(n) + a ribonucleoside 5'-triphosphate = RNA(n+1) + diphosphate. Functionally, DNA-dependent RNA polymerase catalyzes the transcription of DNA into RNA using the four ribonucleoside triphosphates as substrates. The chain is DNA-directed RNA polymerase subunit beta' from Xanthomonas campestris pv. campestris (strain B100).